The chain runs to 305 residues: LysM and putative peptidoglycan-binding domain-containing protein 3 (305 aa).

Residues 1 to 216 lie on the Extracellular side of the membrane; it reads MAGRNQNRTV…PYYGADWGIG (216 aa). N-linked (GlcNAc...) asparagine glycans are attached at residues N7 and N26. S55 carries the post-translational modification Phosphoserine. Positions 65-109 constitute a LysM domain; the sequence is LTKDIQEGDTLNAVALQYCCTVADIKRVNNLISDQDFFALRSIKI. A glycan (N-linked (GlcNAc...) asparagine) is linked at N199. Residues 217–237 form a helical membrane-spanning segment; sequence WWTAVVIMLIVGIITPVFYLL. Over 238-305 the chain is Cytoplasmic; the sequence is YYEILAKVDV…PQAHDAQHKT (68 aa). The interval 253–305 is disordered; sequence VGSSHLHPGLTPPTQHREMENEIGPTKGIPVGQQDDHKLYRQDPQAHDAQHKT. Residues 286 to 305 show a composition bias toward basic and acidic residues; that stretch reads QDDHKLYRQDPQAHDAQHKT.

It localises to the cell membrane. The protein localises to the golgi apparatus. In terms of biological role, essential for Golgi structural integrity. This chain is LysM and putative peptidoglycan-binding domain-containing protein 3 (Lysmd3), found in Mus musculus (Mouse).